Consider the following 154-residue polypeptide: Large ribosomal subunit protein uL13 (154 aa).

This sequence belongs to the universal ribosomal protein uL13 family. In terms of assembly, part of the 50S ribosomal subunit.

Functionally, this protein is one of the early assembly proteins of the 50S ribosomal subunit, although it is not seen to bind rRNA by itself. It is important during the early stages of 50S assembly. The sequence is that of Large ribosomal subunit protein uL13 from Rhizobium etli (strain ATCC 51251 / DSM 11541 / JCM 21823 / NBRC 15573 / CFN 42).